The primary structure comprises 158 residues: Transcription elongation factor GreA (158 aa).

Positions 4–75 (EKTYPMTQEG…TQLENMIRNA (72 aa)) form a coiled coil.

The protein belongs to the GreA/GreB family.

Its function is as follows. Necessary for efficient RNA polymerase transcription elongation past template-encoded arresting sites. The arresting sites in DNA have the property of trapping a certain fraction of elongating RNA polymerases that pass through, resulting in locked ternary complexes. Cleavage of the nascent transcript by cleavage factors such as GreA or GreB allows the resumption of elongation from the new 3'terminus. GreA releases sequences of 2 to 3 nucleotides. The polypeptide is Transcription elongation factor GreA (Bacillus anthracis (strain A0248)).